Reading from the N-terminus, the 469-residue chain is Trigger factor (469 aa).

The 82-residue stretch at Gly-162–Pro-243 folds into the PPIase FKBP-type domain. A disordered region spans residues Gly-438–Lys-469. A compositionally biased stretch (acidic residues) spans Ala-444 to Lys-469.

It belongs to the FKBP-type PPIase family. Tig subfamily.

It is found in the cytoplasm. It carries out the reaction [protein]-peptidylproline (omega=180) = [protein]-peptidylproline (omega=0). Involved in protein export. Acts as a chaperone by maintaining the newly synthesized protein in an open conformation. Functions as a peptidyl-prolyl cis-trans isomerase. This Mycolicibacterium smegmatis (strain ATCC 700084 / mc(2)155) (Mycobacterium smegmatis) protein is Trigger factor.